Here is a 273-residue protein sequence, read N- to C-terminus: Putative pyruvate, phosphate dikinase regulatory protein (273 aa).

153–160 (GVSRTSKT) lines the ADP pocket.

Belongs to the pyruvate, phosphate/water dikinase regulatory protein family. PDRP subfamily.

It carries out the reaction N(tele)-phospho-L-histidyl/L-threonyl-[pyruvate, phosphate dikinase] + ADP = N(tele)-phospho-L-histidyl/O-phospho-L-threonyl-[pyruvate, phosphate dikinase] + AMP + H(+). The enzyme catalyses N(tele)-phospho-L-histidyl/O-phospho-L-threonyl-[pyruvate, phosphate dikinase] + phosphate + H(+) = N(tele)-phospho-L-histidyl/L-threonyl-[pyruvate, phosphate dikinase] + diphosphate. In terms of biological role, bifunctional serine/threonine kinase and phosphorylase involved in the regulation of the pyruvate, phosphate dikinase (PPDK) by catalyzing its phosphorylation/dephosphorylation. This Sinorhizobium fredii (strain NBRC 101917 / NGR234) protein is Putative pyruvate, phosphate dikinase regulatory protein.